The sequence spans 358 residues: Alanine racemase (358 aa).

The active-site Proton acceptor; specific for D-alanine is K35. K35 is subject to N6-(pyridoxal phosphate)lysine. R130 provides a ligand contact to substrate. Catalysis depends on Y255, which acts as the Proton acceptor; specific for L-alanine. Residue M303 participates in substrate binding.

Belongs to the alanine racemase family. The cofactor is pyridoxal 5'-phosphate.

It carries out the reaction L-alanine = D-alanine. It functions in the pathway amino-acid biosynthesis; D-alanine biosynthesis; D-alanine from L-alanine: step 1/1. Catalyzes the interconversion of L-alanine and D-alanine. May also act on other amino acids. In Shewanella baltica (strain OS185), this protein is Alanine racemase (alr).